The primary structure comprises 122 residues: S-adenosylmethionine decarboxylase proenzyme (122 aa).

Serine 69 (schiff-base intermediate with substrate; via pyruvic acid) is an active-site residue. Serine 69 carries the pyruvic acid (Ser); by autocatalysis modification. Histidine 74 serves as the catalytic Proton acceptor; for processing activity. Cysteine 89 acts as the Proton donor; for catalytic activity in catalysis.

Belongs to the prokaryotic AdoMetDC family. Type 1 subfamily. In terms of assembly, heterotetramer of two alpha and two beta chains arranged as a dimer of alpha/beta heterodimers. The cofactor is pyruvate. Post-translationally, is synthesized initially as an inactive proenzyme. Formation of the active enzyme involves a self-maturation process in which the active site pyruvoyl group is generated from an internal serine residue via an autocatalytic post-translational modification. Two non-identical subunits are generated from the proenzyme in this reaction, and the pyruvate is formed at the N-terminus of the alpha chain, which is derived from the carboxyl end of the proenzyme. The post-translation cleavage follows an unusual pathway, termed non-hydrolytic serinolysis, in which the side chain hydroxyl group of the serine supplies its oxygen atom to form the C-terminus of the beta chain, while the remainder of the serine residue undergoes an oxidative deamination to produce ammonia and the pyruvoyl group blocking the N-terminus of the alpha chain.

The catalysed reaction is S-adenosyl-L-methionine + H(+) = S-adenosyl 3-(methylsulfanyl)propylamine + CO2. The protein operates within amine and polyamine biosynthesis; S-adenosylmethioninamine biosynthesis; S-adenosylmethioninamine from S-adenosyl-L-methionine: step 1/1. In terms of biological role, catalyzes the decarboxylation of S-adenosylmethionine to S-adenosylmethioninamine (dcAdoMet), the propylamine donor required for the synthesis of the polyamines spermine and spermidine from the diamine putrescine. The sequence is that of S-adenosylmethionine decarboxylase proenzyme from Saccharolobus islandicus (strain L.S.2.15 / Lassen #1) (Sulfolobus islandicus).